The following is a 136-amino-acid chain: ATP synthase epsilon chain, chloroplastic (136 aa).

The protein belongs to the ATPase epsilon chain family. As to quaternary structure, F-type ATPases have 2 components, CF(1) - the catalytic core - and CF(0) - the membrane proton channel. CF(1) has five subunits: alpha(3), beta(3), gamma(1), delta(1), epsilon(1). CF(0) has three main subunits: a, b and c.

It is found in the plastid. Its subcellular location is the chloroplast thylakoid membrane. Its function is as follows. Produces ATP from ADP in the presence of a proton gradient across the membrane. This is ATP synthase epsilon chain, chloroplastic from Tetradesmus obliquus (Green alga).